The sequence spans 148 residues: Snaclec alboaggregin-D subunit beta (148 aa).

An N-terminal signal peptide occupies residues 1–23; that stretch reads MGRFISVSFGLLVVFLSLSGAGA. Cysteine 27 and cysteine 38 form a disulfide bridge. A C-type lectin domain is found at 34-145; the sequence is YDLYCYKVFK…CNSTYSFVCK (112 aa). Asparagine 47 carries an N-linked (GlcNAc...) asparagine glycan. Disulfide bonds link cysteine 55-cysteine 144 and cysteine 121-cysteine 136. Asparagine 137 is a glycosylation site (N-linked (GlcNAc...) asparagine).

Tetramer of heterodimers of alpha and beta subunits (alphabeta)(4); disulfide-linked. Expressed by the venom gland.

It localises to the secreted. Snaclec that induces human platelet aggregation in the absence of any cofactor with the EC(50) of 0.25 nM and causes tyrosine phosphorylation in human platelets. Antibodies against either platelet GPIbalpha (GP1BA) or GPVI (GP6) inhibit alboaggregin D-induced platelet aggregation. Only the combination of these two antibodies completely inhibit aggregation, suggesting that it acts through both GPIbalpha (GP1BA) and GPVI (GP6). In Trimeresurus albolabris (White-lipped pit viper), this protein is Snaclec alboaggregin-D subunit beta.